The chain runs to 133 residues: Probable 4-amino-4-deoxy-L-arabinose-phosphoundecaprenol flippase subunit ArnF (133 aa).

Over 1–5 the chain is Cytoplasmic; the sequence is MKTGY. A helical membrane pass occupies residues 6–26; the sequence is LWAIASALLVTVAQLLLKIGM. The Periplasmic portion of the chain corresponds to 27-47; the sequence is SELPDLQLEKQWFDLHWLWAN. A helical transmembrane segment spans residues 48-68; sequence IIPISVVFVGLIGYVLSMVCW. Residues 51-125 enclose the EamA domain; the sequence is ISVVFVGLIG…IMLGVWLISQ (75 aa). Residues 69 to 80 lie on the Cytoplasmic side of the membrane; the sequence is LLTLRTIPLNKA. Residues 81–101 traverse the membrane as a helical segment; the sequence is YPLISLSYVFVYILAVVLPWF. At 102–103 the chain is on the periplasmic side; sequence QE. A helical membrane pass occupies residues 104–124; it reads TLSWSKTIGIIFIMLGVWLIS. Over 125-133 the chain is Cytoplasmic; that stretch reads QKTEQTTSH.

Belongs to the ArnF family. Heterodimer of ArnE and ArnF.

It is found in the cell inner membrane. It participates in bacterial outer membrane biogenesis; lipopolysaccharide biosynthesis. Its function is as follows. Translocates 4-amino-4-deoxy-L-arabinose-phosphoundecaprenol (alpha-L-Ara4N-phosphoundecaprenol) from the cytoplasmic to the periplasmic side of the inner membrane. The chain is Probable 4-amino-4-deoxy-L-arabinose-phosphoundecaprenol flippase subunit ArnF from Proteus mirabilis (strain HI4320).